Consider the following 153-residue polypeptide: Nitrogen regulatory protein (153 aa).

In terms of domain architecture, PTS EIIA type-2 spans 5–148 (DLVAPEAILP…QAIYSVLALP (144 aa)). H66 acts as the Tele-phosphohistidine intermediate in catalysis.

Its subcellular location is the cytoplasm. In terms of biological role, seems to have a role in regulating nitrogen assimilation. This is Nitrogen regulatory protein (ptsN) from Bradyrhizobium diazoefficiens (strain JCM 10833 / BCRC 13528 / IAM 13628 / NBRC 14792 / USDA 110).